The chain runs to 679 residues: Protein CASP (679 aa).

The Cytoplasmic portion of the chain corresponds to 1 to 614 (MDTSVYSHAL…VILQNKMTRM (614 aa)). 2 coiled-coil regions span residues 14-90 (AKAD…EKVL) and 178-341 (RNWK…NYSD). A Phosphoserine modification is found at serine 364. Positions 385-444 (ANKKLQATLAEYRSKSTAQEEERNELKKSVDQLKQQIATLKEANEKLETDLEKVENVSPH) form a coiled coil. Serine 450 and serine 453 each carry phosphoserine. Positions 492 to 540 (IVTKQRDRFRSRNMDLEKQLRQGNSEKGKLKLEISKLKGDNTKLYERIR) form a coiled coil. At serine 555 the chain carries Phosphoserine. The helical; Anchor for type IV membrane protein transmembrane segment at 615–635 (VFLFYCIGLHGLVFMMSMYVI) threads the bilayer. Over 636–679 (NISGYMTPEVGIVQSAKSSSNLNGGLGGAEKVAAGVGSVHGINR) the chain is Lumenal.

It belongs to the CASP family.

The protein localises to the golgi apparatus membrane. May be involved in intra-Golgi transport. This is Protein CASP (COY1) from Saccharomyces cerevisiae (strain ATCC 204508 / S288c) (Baker's yeast).